Consider the following 131-residue polypeptide: UPF0102 protein AZC_4471 (131 aa).

This sequence belongs to the UPF0102 family.

The chain is UPF0102 protein AZC_4471 from Azorhizobium caulinodans (strain ATCC 43989 / DSM 5975 / JCM 20966 / LMG 6465 / NBRC 14845 / NCIMB 13405 / ORS 571).